We begin with the raw amino-acid sequence, 815 residues long: Vacuolar proton translocating ATPase 100 kDa subunit (815 aa).

At M1 to E402 the chain is on the cytoplasmic side. Residues V403 to F421 form a helical membrane-spanning segment. Topologically, residues G422–D423 are vacuolar. A helical membrane pass occupies residues V424–L440. Over E441–Q454 the chain is Cytoplasmic. Residues M455–P484 form a helical membrane-spanning segment. The Vacuolar portion of the chain corresponds to M485–S530. A helical transmembrane segment spans residues F531–F550. Topologically, residues S551–F571 are cytoplasmic. A helical transmembrane segment spans residues V572 to K592. The Vacuolar segment spans residues W593–A639. Residues L640–M659 form a helical membrane-spanning segment. Topologically, residues K660–T706 are cytoplasmic. The helical transmembrane segment at I707–S731 threads the bilayer. The Vacuolar portion of the chain corresponds to E732–G749. The chain crosses the membrane as a helical span at residues N750–E788. Topologically, residues F789 to E815 are cytoplasmic.

Belongs to the V-ATPase 116 kDa subunit family. As to quaternary structure, the V-ATPase is a heteromultimeric enzyme.

It localises to the cytoplasmic vesicle membrane. It is found in the endosome membrane. The protein resides in the vacuole membrane. The protein localises to the lysosome membrane. Its function is as follows. Essential component of the vacuolar proton pump (V-ATPase), a multimeric enzyme that catalyzes the translocation of protons across the membranes. Required for assembly and activity of the V-ATPase. Required in both the contractile vacuole system and the endosomal/lysosomal system. Also required for cytosolic pH regulation. In Dictyostelium discoideum (Social amoeba), this protein is Vacuolar proton translocating ATPase 100 kDa subunit (vatM).